The chain runs to 153 residues: Interleukin-4 (153 aa).

The signal sequence occupies residues methionine 1–glycine 24. Disulfide bonds link cysteine 27–cysteine 151, cysteine 48–cysteine 89, and cysteine 70–cysteine 123. Residue asparagine 62 is glycosylated (N-linked (GlcNAc...) asparagine).

The protein belongs to the IL-4/IL-13 family.

It is found in the secreted. Its function is as follows. Participates in at least several B-cell activation processes as well as of other cell types. It is a costimulator of DNA-synthesis. It induces the expression of class II MHC molecules on resting B-cells. It enhances both secretion and cell surface expression of IgE and IgG1. It also regulates the expression of the low affinity Fc receptor for IgE (CD23) on both lymphocytes and monocytes. Positively regulates IL31RA expression in macrophages. Stimulates autophagy in dendritic cells by interfering with mTORC1 signaling and through the induction of RUFY4. The protein is Interleukin-4 (IL4) of Cercocebus atys (Sooty mangabey).